We begin with the raw amino-acid sequence, 117 residues long: Immunoglobulin kappa variable 1-39 (117 aa).

The N-terminal stretch at Met-1 to Cys-22 is a signal peptide. The framework-1 stretch occupies residues Asp-23–Cys-45. Residues Ile-24–Pro-117 form the Ig-like domain. Cysteines 45 and 110 form a disulfide. A complementarity-determining-1 region spans residues Arg-46–Asn-56. The interval Trp-57–Tyr-71 is framework-2. Positions Ala-72–Ser-78 are complementarity-determining-2. Residues Gly-79 to Cys-110 are framework-3. The complementarity-determining-3 stretch occupies residues Gln-111–Pro-117.

In terms of assembly, immunoglobulins are composed of two identical heavy chains and two identical light chains; disulfide-linked.

It is found in the secreted. The protein resides in the cell membrane. In terms of biological role, v region of the variable domain of immunoglobulin light chains that participates in the antigen recognition. Immunoglobulins, also known as antibodies, are membrane-bound or secreted glycoproteins produced by B lymphocytes. In the recognition phase of humoral immunity, the membrane-bound immunoglobulins serve as receptors which, upon binding of a specific antigen, trigger the clonal expansion and differentiation of B lymphocytes into immunoglobulins-secreting plasma cells. Secreted immunoglobulins mediate the effector phase of humoral immunity, which results in the elimination of bound antigens. The antigen binding site is formed by the variable domain of one heavy chain, together with that of its associated light chain. Thus, each immunoglobulin has two antigen binding sites with remarkable affinity for a particular antigen. The variable domains are assembled by a process called V-(D)-J rearrangement and can then be subjected to somatic hypermutations which, after exposure to antigen and selection, allow affinity maturation for a particular antigen. The chain is Immunoglobulin kappa variable 1-39 from Homo sapiens (Human).